A 431-amino-acid polypeptide reads, in one-letter code: Adenosylhomocysteinase (431 aa).

Residues Thr-56, Asp-131, and Glu-156 each contribute to the substrate site. Thr-157 to Thr-159 provides a ligand contact to NAD(+). Residues Lys-186 and Asp-190 each contribute to the substrate site. Residues Asn-191, Gly-222–Gly-227, Glu-243, Ile-299–His-301, and Asn-345 contribute to the NAD(+) site.

The protein belongs to the adenosylhomocysteinase family. As to quaternary structure, homotetramer. The cofactor is NAD(+).

It carries out the reaction S-adenosyl-L-homocysteine + H2O = L-homocysteine + adenosine. It functions in the pathway amino-acid biosynthesis; L-homocysteine biosynthesis; L-homocysteine from S-adenosyl-L-homocysteine: step 1/1. Adenosylhomocysteine is a competitive inhibitor of S-adenosyl-L-methionine-dependent methyl transferase reactions; therefore adenosylhomocysteinase may play a key role in the control of methylations via regulation of the intracellular concentration of adenosylhomocysteine. In Dictyostelium discoideum (Social amoeba), this protein is Adenosylhomocysteinase (sahA).